A 456-amino-acid polypeptide reads, in one-letter code: E3 ubiquitin-protein ligase RNF25 (456 aa).

The RWD domain occupies 18–127; it reads SEVEVLESIY…EKGKEILTDN (110 aa). Zn(2+) contacts are provided by cysteine 134, cysteine 137, cysteine 152, histidine 154, histidine 157, cysteine 160, cysteine 195, and cysteine 198. An RING-type zinc finger spans residues 134 to 199; that stretch reads CVICLYGFQE…AVGVQCPVCR (66 aa). The interval 269 to 456 is disordered; that stretch reads LEPESAVDVS…PLGLESEEGS (188 aa). Over residues 288–332 the composition is skewed to polar residues; it reads SAEQSTSLADQSTLPTSLPMTTQYTYEKTSGAGPNQQRPGETQKS. Composition is skewed to basic and acidic residues over residues 364–388 and 410–421; these read SEIH…EPRN and RTRDCARWERSK.

It belongs to the RNF25 family. Interacts with UBE2D2, and may also interact with UBE2E1 and UBE2E3. Interacts with RELA/p65. Post-translationally, ubiquitinated; autoubiquitinated. As to expression, ubiquitous.

It localises to the cytoplasm. The enzyme catalyses S-ubiquitinyl-[E2 ubiquitin-conjugating enzyme]-L-cysteine + [acceptor protein]-L-lysine = [E2 ubiquitin-conjugating enzyme]-L-cysteine + N(6)-ubiquitinyl-[acceptor protein]-L-lysine.. Its pathway is protein modification; protein ubiquitination. E3 ubiquitin-protein ligase that plays a key role in the RNF14-RNF25 translation quality control pathway, a pathway that takes place when a ribosome has stalled during translation, and which promotes ubiquitination and degradation of translation factors on stalled ribosomes. Catalyzes ubiquitination of RPS27A in response to ribosome collisions, promoting activation of RNF14. RNF25 catalyzes ubiquitination of other ribosomal proteins on stalled ribosomes, such as RPL0, RPL1, RPL12, RPS13 and RPS17. Also involved in ubiquitination and degradation of stalled ETF1/eRF1. Independently of its function in the response to stalled ribosomes, mediates ubiquitination and subsequent proteasomal degradation of NKD2. May also stimulate transcription mediated by NF-kappa-B via its interaction with RELA/p65. This is E3 ubiquitin-protein ligase RNF25 from Mus musculus (Mouse).